The following is a 667-amino-acid chain: Cysteine-rich receptor-like protein kinase 11 (667 aa).

Positions 1–24 are cleaved as a signal peptide; it reads MKQRSLFSVLCFFFISFGVASVSA. 2 Gnk2-homologous domains span residues 25–129 and 135–248; these read QTCT…NTSF and LNPR…LYTY. Residues 25 to 292 lie on the Extracellular side of the membrane; that stretch reads QTCTTDKGTF…SKGISAGVVV (268 aa). 7 N-linked (GlcNAc...) asparagine glycosylation sites follow: Asn-37, Asn-54, Asn-64, Asn-106, Asn-126, Asn-150, and Asn-254. The segment covering 259-268 has biased composition (pro residues); the sequence is SPPPEPPVTV. Positions 259-282 are disordered; it reads SPPPEPPVTVPQPAGDQDNPTNND. Asn-281 is a glycosylation site (N-linked (GlcNAc...) asparagine). Residues 293-313 traverse the membrane as a helical segment; that stretch reads AITVPTVIAILILLVLGFVLF. The Cytoplasmic segment spans residues 314 to 667; the sequence is RRRKSYQRTK…YTSKSSSFSS (354 aa). The region spanning 350–629 is the Protein kinase domain; it reads FSTSNKLGEG…IILMLTSNTI (280 aa). ATP-binding positions include 356–364 and Lys-378; that span reads LGEGGFGAV. Tyr-423 is modified (phosphotyrosine). Asp-475 acts as the Proton acceptor in catalysis. The residue at position 479 (Ser-479) is a Phosphoserine. At Thr-515 the chain carries Phosphothreonine. At Tyr-523 the chain carries Phosphotyrosine.

This sequence belongs to the protein kinase superfamily. Ser/Thr protein kinase family. CRK subfamily. As to expression, detected in root, stem, leaf and flower.

It is found in the membrane. It catalyses the reaction L-seryl-[protein] + ATP = O-phospho-L-seryl-[protein] + ADP + H(+). It carries out the reaction L-threonyl-[protein] + ATP = O-phospho-L-threonyl-[protein] + ADP + H(+). This is Cysteine-rich receptor-like protein kinase 11 (CRK11) from Arabidopsis thaliana (Mouse-ear cress).